Here is a 273-residue protein sequence, read N- to C-terminus: Short-chain dehydrogenase fogB (273 aa).

NADP(+) is bound by residues Ile-16, Asp-66, Arg-128, Tyr-174, Lys-178, Val-207, and Thr-209. The Proton donor role is filled by Tyr-174. The Lowers pKa of active site Tyr role is filled by Lys-178.

Belongs to the short-chain dehydrogenases/reductases (SDR) family.

In terms of biological role, short-chain dehydrogenase; part of the gene cluster that mediates the biosynthesis of flavoglaucin and congeners (including aspergin, dihydroauroglaucin and auroglaucin), prenylated salicylaldehyde derivatives carrying a saturated or an unsaturated C-7 side chain. The PKS fogA releases the carboxylic acid (8E,10E,12E)-3,5,7-trihydroxytetradeca-8,10,12-trienoic acid as its product, as well as derivatives with one and two double bonds. FogA is indeed able to reduce the initial triketide, thus being at least partially responsible for the differently saturated heptyl side chains of flavoglaucin congeners. The oxidoreductases fogB, fogC and fogD modify the nascent polyketide in fogA-bound form and, together, fogA, fogB, fogC and fogD are necessary for the formation of the aromatic core and the cyclized PKS products are released as salicyl alcohols. In particular, fogB is responsible for oxidation of a hydroxyl group or reduction of remaining double bond(s) at the C-7 residue whereas fogD is probably involved in the reductive release of the modified PKS products. The cytochrome P450 monooxygenase fogE is then responsible for the hydroxylation at C-3 of the benzene ring. The fogE products are substrates of the prenyltransferase fogH and the prenylated benzyl alcohols are subsequently oxidized by the fogF to produce the final aryl aldehydes flavoglaucin and congeners. The short-chain dehydrogenase fogG does not seem to be involved in the biosynthesis of the prenylated salicylaldehyde derivatives. The chain is Short-chain dehydrogenase fogB from Aspergillus ruber (strain CBS 135680).